A 56-amino-acid chain; its full sequence is uncharacterized protein (56 aa).

The helical transmembrane segment at 2–22 threads the bilayer; that stretch reads ILYIIVAISILLNIILGIKVI.

The protein localises to the membrane. This is an uncharacterized protein from Methanocaldococcus jannaschii (strain ATCC 43067 / DSM 2661 / JAL-1 / JCM 10045 / NBRC 100440) (Methanococcus jannaschii).